Here is a 285-residue protein sequence, read N- to C-terminus: uncharacterized protein (285 aa).

The next 6 membrane-spanning stretches (helical) occupy residues 7-29 (FYRL…LTLQ), 49-71 (LVVW…STFF), 95-117 (IFLY…SNTL), 137-156 (FFSE…VLHA), 232-254 (KVVN…TVAL), and 259-281 (GGLS…IFVV).

The protein resides in the cell membrane. This is an uncharacterized protein from Aquifex aeolicus (strain VF5).